The sequence spans 1038 residues: Isoleucine--tRNA ligase (1038 aa).

The short motif at P47–H57 is the 'HIGH' region element. The short motif at K591 to R595 is the 'KMSKS' region element. Residue K594 coordinates ATP.

It belongs to the class-I aminoacyl-tRNA synthetase family. IleS type 2 subfamily. In terms of assembly, monomer. The cofactor is Zn(2+).

It localises to the cytoplasm. It catalyses the reaction tRNA(Ile) + L-isoleucine + ATP = L-isoleucyl-tRNA(Ile) + AMP + diphosphate. Catalyzes the attachment of isoleucine to tRNA(Ile). As IleRS can inadvertently accommodate and process structurally similar amino acids such as valine, to avoid such errors it has two additional distinct tRNA(Ile)-dependent editing activities. One activity is designated as 'pretransfer' editing and involves the hydrolysis of activated Val-AMP. The other activity is designated 'posttransfer' editing and involves deacylation of mischarged Val-tRNA(Ile). The protein is Isoleucine--tRNA ligase of Protochlamydia amoebophila (strain UWE25).